The primary structure comprises 582 residues: MRAKVELAVLLLVLVGVAAGTRPPSAPPPVTEDTLQKVAGSLEMYVDELPQMPKIYGFSMRHGHPSPIRLTIGMYQKKWKFHRDLPASTVFVFGTSAATATFPGPTIEAAQGVPLSVTWQNYLPARHILPWDPTVPTAIPRRGGVPTVVHLHGGAHPPQSDGSAFAWFTAGFGETGPAWSTPTYTYPNAQSPGVLWYHDHALGLTRANLLAGLLGAYVIRNPAVEAPLGLPCGDEFDRVLMLADRSFYADGSIYMNYTGIIPNIHPQWQPEYFGEAITVNGKAWPFLAVARRRYRFRIINTSNARYFNLSLTNGLPFTVVGSDTNYLSKPVTAASLLVSVAETFDVVVDFSQSTSSEAELVNTAPYPYPDGQAPNDLNGKVMKFVISPAKAKDTSRVPAKLLDYVAVAEEEAVQRRYIVMYEYEDAATGNPTHLYINGKRLEDPATETPRPGTTEVWEVINLTPDNHPLHLHLATFQATRVRGLVDEDAFKGCMAKLNDAVRCNVSRHAVGEEVAVPEHEKGWKNVVKIAPGYMTTIVVKFFMVDSGKPYPFDATAEPGYVYHCHILDHEDNAMIRPLKLIK.

Positions methionine 1–glycine 20 are cleaved as a signal peptide. Cu cation contacts are provided by histidine 150, histidine 152, histidine 198, and histidine 200. Residues asparagine 256, asparagine 300, and asparagine 308 are each glycosylated (N-linked (GlcNAc...) asparagine). In terms of domain architecture, Plastocyanin-like spans proline 285–threonine 354. Histidine 467, histidine 470, and histidine 472 together coordinate Cu cation. A glycan (N-linked (GlcNAc...) asparagine) is linked at asparagine 504. Residues histidine 563, cysteine 564, histidine 565, histidine 569, and methionine 574 each coordinate Cu cation.

It belongs to the multicopper oxidase family. It depends on Cu cation as a cofactor. As to expression, highly expressed in roots, and at lower levels in basal stems and leaf blades.

The protein resides in the endoplasmic reticulum membrane. Multicopper oxidase that may play a role in the maintenance of inorganic phosphate homeostasis. The chain is Multicopper oxidase LPR1 homolog 1 from Oryza sativa subsp. japonica (Rice).